The sequence spans 348 residues: Inositol 2-dehydrogenase/D-chiro-inositol 3-dehydrogenase (348 aa).

This sequence belongs to the Gfo/Idh/MocA family. As to quaternary structure, homotetramer.

The enzyme catalyses myo-inositol + NAD(+) = scyllo-inosose + NADH + H(+). The catalysed reaction is 1D-chiro-inositol + NAD(+) = scyllo-inosine + NADH + H(+). Its pathway is polyol metabolism; myo-inositol degradation into acetyl-CoA; acetyl-CoA from myo-inositol: step 1/7. Its function is as follows. Involved in the oxidation of myo-inositol (MI) and D-chiro-inositol (DCI) to 2-keto-myo-inositol (2KMI or 2-inosose) and 1-keto-D-chiro-inositol (1KDCI), respectively. The protein is Inositol 2-dehydrogenase/D-chiro-inositol 3-dehydrogenase of Halalkalibacterium halodurans (strain ATCC BAA-125 / DSM 18197 / FERM 7344 / JCM 9153 / C-125) (Bacillus halodurans).